A 213-amino-acid chain; its full sequence is Insulin-like peptide INSL6 (213 aa).

An N-terminal signal peptide occupies residues 1-20; that stretch reads MPRLLRLSLLWLGLLLVRFS. 3 cysteine pairs are disulfide-bonded: Cys-33-Cys-179, Cys-45-Cys-192, and Cys-178-Cys-183. A propeptide spans 55 to 168 (connecting peptide); the sequence is FEEETPFSRL…SNLFWGHHPQ (114 aa). Positions 201–213 are excised as a propeptide; it reads LKEKRSSLVTKIY.

The protein belongs to the insulin family. Testis specific.

The protein localises to the secreted. In terms of biological role, may have a role in sperm development and fertilization. The polypeptide is Insulin-like peptide INSL6 (INSL6) (Homo sapiens (Human)).